Consider the following 354-residue polypeptide: Methylthioribose-1-phosphate isomerase (354 aa).

Substrate contacts are provided by residues 58-60, arginine 101, and glutamine 204; that span reads RGA. The Proton donor role is filled by aspartate 245. 255–256 lines the substrate pocket; that stretch reads NK.

Belongs to the eIF-2B alpha/beta/delta subunits family. MtnA subfamily.

It catalyses the reaction 5-(methylsulfanyl)-alpha-D-ribose 1-phosphate = 5-(methylsulfanyl)-D-ribulose 1-phosphate. Its pathway is amino-acid biosynthesis; L-methionine biosynthesis via salvage pathway; L-methionine from S-methyl-5-thio-alpha-D-ribose 1-phosphate: step 1/6. Catalyzes the interconversion of methylthioribose-1-phosphate (MTR-1-P) into methylthioribulose-1-phosphate (MTRu-1-P). In Stenotrophomonas maltophilia (strain R551-3), this protein is Methylthioribose-1-phosphate isomerase.